A 210-amino-acid polypeptide reads, in one-letter code: MYRIKDEWGEFLVRLARRAIEEYLRTGREIEPPKDIPPELWEKMGVFVTLNRHNVPPQAALRGCIGFPLPIYPLVKATIKAAIYAAVDDPRFPPVKLEEMNNIVVEVSVLTPPELIEGPPEERPKKIKVGRDGLIVEKGIYTGLLLPQVAVEWGWDEEEFLAETCWKAGLPPDCWLDEDTKVYKFTAEIFEEEYPRGPVKRKPLIPQSQD.

The AMMECR1 domain occupies 7–201 (EWGEFLVRLA…EEYPRGPVKR (195 aa)).

The polypeptide is Protein PF1979 (Pyrococcus furiosus (strain ATCC 43587 / DSM 3638 / JCM 8422 / Vc1)).